A 310-amino-acid polypeptide reads, in one-letter code: MFQHTTVLLKEAVDGLNVRPDGVYVDCTLGGGGHSEYLLSRLSKRGKLFAFDQDETAILHASERLARYREQVQFINRNFRFLQEELSALGIHAVDGILFDLGVSSPQLDEPERGFSYQHDAPLDMRMDRKQRLTAAEIVNRWPYEELVRIFFRYGEEKFSKQVARKIEEVRRKRPIETTGELVEVIKAAIPAPARRSGGHPAKRIFQALRIAVNDELEAFREALEQAIELLAPGGRVSVITFHSLEDRICKETFKKASESPPLPPGLPVLPDDYRPVLKIITKKPVVPSAEELERNNRARSAKLRIAEKQ.

S-adenosyl-L-methionine contacts are provided by residues 32 to 34 (GGH), Asp52, Phe79, Asp100, and Gln107.

This sequence belongs to the methyltransferase superfamily. RsmH family.

It localises to the cytoplasm. The catalysed reaction is cytidine(1402) in 16S rRNA + S-adenosyl-L-methionine = N(4)-methylcytidine(1402) in 16S rRNA + S-adenosyl-L-homocysteine + H(+). Specifically methylates the N4 position of cytidine in position 1402 (C1402) of 16S rRNA. The protein is Ribosomal RNA small subunit methyltransferase H of Geobacillus thermodenitrificans (strain NG80-2).